Here is an 89-residue protein sequence, read N- to C-terminus: MRELDREELNCVGGAGDPLADPNSQIVRQIMSNAAWGAAFGARGGLGGMAVGAAGGVTQTVLQGAAAHMPVNVPIPKVPMGPSWNGSKG.

Positions 1-15 are cleaved as a signal peptide; that stretch reads MRELDREELNCVGGA.

Belongs to the class IIa microcin family. Post-translationally, mass spectrometry suggests 3 of the 4 Met residues of the mature peptide are oxidized.

It localises to the secreted. Functionally, active against E.coli and Salmonella, but not Listeria or Campylobacter. Channel-forming microcin. Probably neutralized by its immunity protein McnI. This chain is Microcin N, found in Escherichia coli.